Consider the following 270-residue polypeptide: 4-hydroxy-tetrahydrodipicolinate reductase (270 aa).

NAD(+)-binding positions include 9–14 (GAGGRM) and glutamate 35. Arginine 36 serves as a coordination point for NADP(+). NAD(+)-binding positions include 99 to 101 (GTT) and 123 to 126 (ASNF). Histidine 156 functions as the Proton donor/acceptor in the catalytic mechanism. Histidine 157 contacts (S)-2,3,4,5-tetrahydrodipicolinate. Lysine 160 functions as the Proton donor in the catalytic mechanism. 166-167 (GT) provides a ligand contact to (S)-2,3,4,5-tetrahydrodipicolinate.

Belongs to the DapB family.

Its subcellular location is the cytoplasm. The catalysed reaction is (S)-2,3,4,5-tetrahydrodipicolinate + NAD(+) + H2O = (2S,4S)-4-hydroxy-2,3,4,5-tetrahydrodipicolinate + NADH + H(+). It catalyses the reaction (S)-2,3,4,5-tetrahydrodipicolinate + NADP(+) + H2O = (2S,4S)-4-hydroxy-2,3,4,5-tetrahydrodipicolinate + NADPH + H(+). The protein operates within amino-acid biosynthesis; L-lysine biosynthesis via DAP pathway; (S)-tetrahydrodipicolinate from L-aspartate: step 4/4. Its function is as follows. Catalyzes the conversion of 4-hydroxy-tetrahydrodipicolinate (HTPA) to tetrahydrodipicolinate. This is 4-hydroxy-tetrahydrodipicolinate reductase from Haemophilus influenzae (strain ATCC 51907 / DSM 11121 / KW20 / Rd).